A 325-amino-acid chain; its full sequence is ATPase ASNA1 homolog 2 (325 aa).

22 to 29 (KGGVGKTT) is a binding site for ATP. Asp-51 is a catalytic residue. ATP is bound by residues Glu-231 and Asn-258. Zn(2+)-binding residues include Cys-267 and Cys-270.

The protein belongs to the arsA ATPase family. As to quaternary structure, homodimer.

The protein localises to the cytoplasm. Its subcellular location is the endoplasmic reticulum. ATPase required for the post-translational delivery of tail-anchored (TA) proteins to the endoplasmic reticulum. Recognizes and selectively binds the transmembrane domain of TA proteins in the cytosol. This complex then targets to the endoplasmic reticulum by membrane-bound receptors, where the tail-anchored protein is released for insertion. This process is regulated by ATP binding and hydrolysis. ATP binding drives the homodimer towards the closed dimer state, facilitating recognition of newly synthesized TA membrane proteins. ATP hydrolysis is required for insertion. Subsequently, the homodimer reverts towards the open dimer state, lowering its affinity for the membrane-bound receptor, and returning it to the cytosol to initiate a new round of targeting. This is ATPase ASNA1 homolog 2 from Paramecium tetraurelia.